Here is a 722-residue protein sequence, read N- to C-terminus: Solute carrier organic anion transporter family member 4C1 (722 aa).

Residues 1-81 (MQGSKGIENP…PGSQLSELEE (81 aa)) are disordered. Topologically, residues 1-101 (MQGSKGIENP…QCLQRCNTPQ (101 aa)) are cytoplasmic. Phosphoserine is present on residues S15 and S16. Position 19 is a phosphothreonine (T19). Phosphoserine occurs at positions 24, 26, and 28. A compositionally biased stretch (polar residues) spans 25 to 46 (ASPSQVEVSAVASRNQNGGSQP). A helical membrane pass occupies residues 102–122 (GFLLHYCLLALTQGIVVNGLV). The Extracellular portion of the chain corresponds to 123–141 (NISISTIEKRYEMKSSLTG). The helical transmembrane segment at 142 to 162 (LISSSYDISFCVLSLFVSFFG) threads the bilayer. Residues 163-168 (ERGHKP) are Cytoplasmic-facing. Residues 169–193 (RWLAFASFMIGLGALVFSLPHFFSG) traverse the membrane as a helical segment. Over 194 to 218 (RYELGSIFEDTCLTRNSTRCSSSTS) the chain is Extracellular. A helical membrane pass occupies residues 219-249 (LLSNYFYVFVLGQLLLGTGGTPLYTLGTAFI). Residues 250–269 (DDSVPTHKSSLYIGIGYSMS) are Cytoplasmic-facing. Residues 270–290 (ILGPAIGYVLGGQLLTMYIDI) traverse the membrane as a helical segment. The Extracellular portion of the chain corresponds to 291-306 (AMGQSSDLTEDDPRWL). A helical membrane pass occupies residues 307–331 (GAWWIGFLLAWLFAWSLIMPFSCFP). The Cytoplasmic portion of the chain corresponds to 332–376 (KHLPGTAKIQAGKTSQTHQNNSTSFQHTDENFGKSIKDFPTAVKN). A helical membrane pass occupies residues 377-398 (LMRNTVFICLVLSTTSEALITT). The Extracellular portion of the chain corresponds to 399–418 (GFATFLPKFIENQFGLTSSF). The chain crosses the membrane as a helical span at residues 419–442 (AATLGGAVLIPGAALGQILGGVLV). Over 443–446 (SKFK) the chain is Cytoplasmic. A helical membrane pass occupies residues 447-470 (MKCKNTMKFALCTSGVALVLSFVF). Residues 471–578 (IYAKCENEPF…RTRCSNLPIF (108 aa)) lie on the Extracellular side of the membrane. The Kazal-like domain occupies 494–549 (GNLTAPCNANCNCLRSYYYPLCGSDGIQYFSPCFAGCLNSVSNRKPKVYYNCSCIE). Cystine bridges form between C500/C530, C506/C526, and C515/C547. Residues 579-601 (LGIFFITVIFTFMAGTPITVSIL) form a helical membrane-spanning segment. Residues 602 to 610 (RCVNHRHRS) are Cytoplasmic-facing. The helical transmembrane segment at 611–636 (LALGVQFMLLRLLGTIPGPIIFGVII) threads the bilayer. At 637 to 670 (DSTCVLWDVNECGIKGACWIYDNIKMAHMLVAIS) the chain is on the extracellular side. The chain crosses the membrane as a helical span at residues 671 to 688 (VTCKVITIFFNGLAIVLY). Over 689–722 (KPPPPGTEVSFQSQNVIVSTISVEEDLDKAENEG) the chain is Cytoplasmic.

The protein belongs to the organo anion transporter (TC 2.A.60) family. Strongly expressed in initial segment of epididymis and seminal vesicles.

It localises to the basolateral cell membrane. The catalysed reaction is estrone 3-sulfate(out) = estrone 3-sulfate(in). It catalyses the reaction L-thyroxine(out) = L-thyroxine(in). The enzyme catalyses 3,3',5-triiodo-L-thyronine(out) = 3,3',5-triiodo-L-thyronine(in). It carries out the reaction chenodeoxycholate(out) = chenodeoxycholate(in). The catalysed reaction is glycocholate(out) = glycocholate(in). It catalyses the reaction L-homoarginine(in) = L-homoarginine(out). The enzyme catalyses L-arginine(in) = L-arginine(out). It carries out the reaction N(omega),N(omega)-dimethyl-L-arginine(out) = N(omega),N(omega)-dimethyl-L-arginine(in). Its function is as follows. Mediates the transport of organic anions such as steroids (estrone 3-sulfate, chenodeoxycholate, glycocholate) and thyroid hormones (3,3',5-triiodo-L-thyronine (T3), L-thyroxine (T4)), in the kidney. Capable of transporting cAMP and pharmacological substances such as digoxin, ouabain and methotrexate. Transport is independent of sodium, chloride ion, and ATP. Transport activity is stimulated by an acidic extracellular environment due to increased substrate affinity to the transporter. The driving force for this transport activity is currently not known. The role of hydrogencarbonate (HCO3(-), bicarbonate) as the probable counteranion that exchanges for organic anions is still not well defined. Functions as an uptake transporter at the apical membrane, suggesting a role in renal reabsorption. Involved in the renal secretion of the uremic toxin ADMA (N(omega),N(omega)-dimethyl-L-arginine or asymmetrical dimethylarginine), which is associated to cardiovascular events and mortality, and the structurally related amino acids L-arginine and L-homoarginine (a cardioprotective biomarker). Can act bidirectionally, suggesting a dual protective role of this transport protein; exporting L-homoarginine after being synthesized in proximal tubule cells, and mediating uptake of ADMA from the blood into proximal tubule cells where it is degraded by the enzyme dimethylarginine dimethylaminohydrolase 1 (DDAH1). May be involved in sperm maturation by enabling directed movement of organic anions and compounds within or between cells. This ion-transporting process is important to maintain the strict epididymal homeostasis necessary for sperm maturation. May have a role in secretory functions since seminal vesicle epithelial cells are assumed to secrete proteins involved in decapacitation by modifying surface proteins to facilitate the acquisition of the ability to fertilize the egg. This Mus musculus (Mouse) protein is Solute carrier organic anion transporter family member 4C1.